Reading from the N-terminus, the 261-residue chain is uncharacterized protein (261 aa).

It belongs to the PaiB family.

This is an uncharacterized protein from Aspergillus fumigatus (strain ATCC MYA-4609 / CBS 101355 / FGSC A1100 / Af293) (Neosartorya fumigata).